Consider the following 193-residue polypeptide: Xanthine phosphoribosyltransferase (193 aa).

The xanthine site is built by L20 and N27. 129 to 133 contributes to the 5-phospho-alpha-D-ribose 1-diphosphate binding site; that stretch reads ANGKA. A xanthine-binding site is contributed by K157.

It belongs to the purine/pyrimidine phosphoribosyltransferase family. Xpt subfamily. Homodimer.

It localises to the cytoplasm. It carries out the reaction XMP + diphosphate = xanthine + 5-phospho-alpha-D-ribose 1-diphosphate. It functions in the pathway purine metabolism; XMP biosynthesis via salvage pathway; XMP from xanthine: step 1/1. Its function is as follows. Converts the preformed base xanthine, a product of nucleic acid breakdown, to xanthosine 5'-monophosphate (XMP), so it can be reused for RNA or DNA synthesis. The protein is Xanthine phosphoribosyltransferase of Bifidobacterium longum (strain NCC 2705).